The chain runs to 110 residues: Large ribosomal subunit protein uL22 (110 aa).

It belongs to the universal ribosomal protein uL22 family. As to quaternary structure, part of the 50S ribosomal subunit.

In terms of biological role, this protein binds specifically to 23S rRNA; its binding is stimulated by other ribosomal proteins, e.g. L4, L17, and L20. It is important during the early stages of 50S assembly. It makes multiple contacts with different domains of the 23S rRNA in the assembled 50S subunit and ribosome. The globular domain of the protein is located near the polypeptide exit tunnel on the outside of the subunit, while an extended beta-hairpin is found that lines the wall of the exit tunnel in the center of the 70S ribosome. This Shewanella denitrificans (strain OS217 / ATCC BAA-1090 / DSM 15013) protein is Large ribosomal subunit protein uL22.